The primary structure comprises 552 residues: Formate--tetrahydrofolate ligase (552 aa).

Position 62-69 (62-69 (TPAGEGKS)) interacts with ATP.

It belongs to the formate--tetrahydrofolate ligase family.

The catalysed reaction is (6S)-5,6,7,8-tetrahydrofolate + formate + ATP = (6R)-10-formyltetrahydrofolate + ADP + phosphate. It participates in one-carbon metabolism; tetrahydrofolate interconversion. The polypeptide is Formate--tetrahydrofolate ligase (Ligilactobacillus salivarius (strain UCC118) (Lactobacillus salivarius)).